Here is a 687-residue protein sequence, read N- to C-terminus: Bifunctional lysine-specific demethylase and histidyl-hydroxylase NO66 (687 aa).

Positions 1 to 174 are disordered; that stretch reads MSDKNKKVSA…RSCPLPSKKN (174 aa). A compositionally biased stretch (basic and acidic residues) spans 23-32; the sequence is DVQKGTKNSD. Low complexity-rich tracts occupy residues 33-50 and 58-74; these read KNGAAKNNNNRNLASKNG and KKNGSYSDGDNGSSSSS. Residues 75–96 are compositionally biased toward acidic residues; that stretch reads GEDEEDDSTDSSDEYESSESGE. Polar residues-rich tracts occupy residues 100–116 and 136–156; these read LNSHSSQSSPETPANTR and RTSSTPVGQSTSAARSTQQPK. The JmjC domain maps to 347-483; the sequence is NPSSYLVQLR…NLMEKLMPLV (137 aa). 3 residues coordinate Fe cation: H387, D389, and H449.

Belongs to the ROX family. NO66 subfamily. Fe(2+) serves as cofactor.

The protein localises to the nucleus. It catalyses the reaction N(6),N(6)-dimethyl-L-lysyl(36)-[histone H3] + 2 2-oxoglutarate + 2 O2 = L-lysyl(36)-[histone H3] + 2 formaldehyde + 2 succinate + 2 CO2. Oxygenase that can act as both a histone lysine demethylase and a ribosomal histidine hydroxylase. Specifically demethylates 'Lys-4' (H3K4me) and 'Lys-36' (H3K36me) of histone H3, thereby playing a central role in histone code. The chain is Bifunctional lysine-specific demethylase and histidyl-hydroxylase NO66 from Drosophila persimilis (Fruit fly).